The primary structure comprises 114 residues: SOSS complex subunit C homolog (114 aa).

Polar residues predominate over residues 1 to 10 (MAFQQHGNQE). The tract at residues 1-61 (MAFQQHGNQE…AGNTSASRIH (61 aa)) is disordered.

This sequence belongs to the SOSS-C family.

The chain is SOSS complex subunit C homolog from Nematostella vectensis (Starlet sea anemone).